Here is a 265-residue protein sequence, read N- to C-terminus: 3-methyl-2-oxobutanoate hydroxymethyltransferase (265 aa).

Mg(2+) is bound by residues aspartate 44 and aspartate 83. 3-methyl-2-oxobutanoate contacts are provided by residues 44 to 45 (DS), aspartate 83, and lysine 113. Residue glutamate 115 coordinates Mg(2+). The active-site Proton acceptor is the glutamate 183.

The protein belongs to the PanB family. As to quaternary structure, homodecamer; pentamer of dimers. The cofactor is Mg(2+).

Its subcellular location is the cytoplasm. It carries out the reaction 3-methyl-2-oxobutanoate + (6R)-5,10-methylene-5,6,7,8-tetrahydrofolate + H2O = 2-dehydropantoate + (6S)-5,6,7,8-tetrahydrofolate. Its pathway is cofactor biosynthesis; (R)-pantothenate biosynthesis; (R)-pantoate from 3-methyl-2-oxobutanoate: step 1/2. Catalyzes the reversible reaction in which hydroxymethyl group from 5,10-methylenetetrahydrofolate is transferred onto alpha-ketoisovalerate to form ketopantoate. In Leptospira borgpetersenii serovar Hardjo-bovis (strain L550), this protein is 3-methyl-2-oxobutanoate hydroxymethyltransferase.